The chain runs to 148 residues: 3-dehydroquinate dehydratase (148 aa).

The Proton acceptor role is filled by tyrosine 23. Positions 75, 81, and 88 each coordinate substrate. Histidine 101 functions as the Proton donor in the catalytic mechanism. Substrate contacts are provided by residues 102 to 103 (LS) and arginine 112.

Belongs to the type-II 3-dehydroquinase family. As to quaternary structure, homododecamer.

The enzyme catalyses 3-dehydroquinate = 3-dehydroshikimate + H2O. It participates in metabolic intermediate biosynthesis; chorismate biosynthesis; chorismate from D-erythrose 4-phosphate and phosphoenolpyruvate: step 3/7. Its function is as follows. Catalyzes a trans-dehydration via an enolate intermediate. The protein is 3-dehydroquinate dehydratase of Ectopseudomonas mendocina (strain ymp) (Pseudomonas mendocina).